We begin with the raw amino-acid sequence, 429 residues long: Adenylosuccinate synthetase (429 aa).

GTP is bound by residues 12-18 (GDEGKGK) and 40-42 (GHT). Catalysis depends on Asp-13, which acts as the Proton acceptor. Residues Asp-13 and Gly-40 each coordinate Mg(2+). IMP contacts are provided by residues 13–16 (DEGK), 38–41 (NAGH), Thr-129, Arg-143, Gln-223, Thr-238, and Arg-302. Catalysis depends on His-41, which acts as the Proton donor. 298-304 (TVTGRPR) contributes to the substrate binding site. Residues Arg-304, 330–332 (KLD), and 412–414 (STS) contribute to the GTP site.

The protein belongs to the adenylosuccinate synthetase family. In terms of assembly, homodimer. It depends on Mg(2+) as a cofactor.

The protein localises to the cytoplasm. The catalysed reaction is IMP + L-aspartate + GTP = N(6)-(1,2-dicarboxyethyl)-AMP + GDP + phosphate + 2 H(+). Its pathway is purine metabolism; AMP biosynthesis via de novo pathway; AMP from IMP: step 1/2. Its function is as follows. Plays an important role in the de novo pathway of purine nucleotide biosynthesis. Catalyzes the first committed step in the biosynthesis of AMP from IMP. The sequence is that of Adenylosuccinate synthetase from Rhodospirillum rubrum (strain ATCC 11170 / ATH 1.1.1 / DSM 467 / LMG 4362 / NCIMB 8255 / S1).